The sequence spans 32 residues: Seminal plasma protein PDC-109 (32 aa).

The interval 1–32 (DQDEGVSTEPTQVGPAELHNDETCVGPLVYRN) is disordered. An O-linked (GalNAc...) threonine glycan is attached at Thr11. In terms of domain architecture, Fibronectin type-II spans 19–32 (HNDETCVGPLVYRN).

It belongs to the seminal plasma protein family. Homodimer.

It is found in the secreted. Could enhance the fertilizing capacity of bull spermatozoa upon interaction with heparin-like glycosaminoglycans present in the female genital tract. Exhibits both simulatory and inhibitory actions on the release of pituitary gonadotropins. Binds to heparin and gelatin. This Bos indicus (Zebu) protein is Seminal plasma protein PDC-109.